Here is a 33-residue protein sequence, read N- to C-terminus: Photosystem II reaction center protein Psb30 (33 aa).

Residues 5–25 (LITQLASLILIVASGPIVIGL) traverse the membrane as a helical segment.

The protein belongs to the Psb30/Ycf12 family. In terms of assembly, PSII is composed of 1 copy each of membrane proteins PsbA, PsbB, PsbC, PsbD, PsbE, PsbF, PsbH, PsbI, PsbJ, PsbK, PsbL, PsbM, PsbT, PsbX, PsbY, PsbZ, Psb30/Ycf12, peripheral proteins of the oxygen-evolving complex and a large number of cofactors. It forms dimeric complexes.

It localises to the plastid. The protein localises to the chloroplast thylakoid membrane. In terms of biological role, a core subunit of photosystem II (PSII), probably helps stabilize the reaction center. The chain is Photosystem II reaction center protein Psb30 from Lepocinclis buetschlii.